Reading from the N-terminus, the 348-residue chain is Putative olfactory receptor 3A4 (348 aa).

Topologically, residues 1–28 are extracellular; that stretch reads MDLGNSGNDSVVTKFVLLGLTETAALQP. N-linked (GlcNAc...) asparagine glycosylation occurs at asparagine 8. Residues 29-52 form a helical membrane-spanning segment; sequence ILFVIFLLAYVTTIGGTLSILAAI. The Cytoplasmic segment spans residues 53 to 60; the sequence is LMETKLHS. The chain crosses the membrane as a helical span at residues 61-82; that stretch reads PMYFFLGNLSLPDVGCVSVTVP. The Extracellular segment spans residues 83 to 103; that stretch reads AMLSHFISNDRSIPYKACLSE. A disulfide bond links cysteine 100 and cysteine 192. A helical membrane pass occupies residues 104–123; sequence LFFFHLLAGADCFLLTIMAY. Residues 124-143 are Cytoplasmic-facing; it reads DRYLAICQSLTYSSRMSWGI. A helical membrane pass occupies residues 144-161; that stretch reads QQALVGMSCVFSFTNALT. Residues 162–199 are Extracellular-facing; the sequence is QTVALSPLNFCGPNVINHFYCDLPQPFQLSCSSVHLNG. The chain crosses the membrane as a helical span at residues 200–222; it reads QLLFVAAAFMGVAPLVLITVSYA. Topologically, residues 223-239 are cytoplasmic; it reads HVAAAVLRIRSAEGRKK. Residues 240-262 form a helical membrane-spanning segment; that stretch reads AFSTCSSHLTVVGIFYGTGVFSY. The Extracellular segment spans residues 263 to 275; sequence TRLGSVESSDKDK. The helical transmembrane segment at 276-295 threads the bilayer; the sequence is GIGILNTVISPMLNPLIYWT. Topologically, residues 296 to 348 are cytoplasmic; that stretch reads SLLDVGCISHCSSDAGVSPGPPVQSSLCCLQFTALLSPPPGWGGLSPLNSHGL.

This sequence belongs to the G-protein coupled receptor 1 family.

It localises to the cell membrane. Odorant receptor. The sequence is that of Putative olfactory receptor 3A4 (OR3A4P) from Homo sapiens (Human).